We begin with the raw amino-acid sequence, 103 residues long: uncharacterized protein (103 aa).

This is an uncharacterized protein from Haemophilus influenzae (strain ATCC 51907 / DSM 11121 / KW20 / Rd).